Consider the following 245-residue polypeptide: 4-hydroxy-tetrahydrodipicolinate reductase (245 aa).

NAD(+) is bound by residues 8–13 (GSTGKM), 78–80 (GTT), and 102–105 (SANM). His-134 (proton donor/acceptor) is an active-site residue. His-135 contributes to the (S)-2,3,4,5-tetrahydrodipicolinate binding site. Lys-138 functions as the Proton donor in the catalytic mechanism. 144–145 (GT) is a (S)-2,3,4,5-tetrahydrodipicolinate binding site.

Belongs to the DapB family.

It localises to the cytoplasm. It carries out the reaction (S)-2,3,4,5-tetrahydrodipicolinate + NAD(+) + H2O = (2S,4S)-4-hydroxy-2,3,4,5-tetrahydrodipicolinate + NADH + H(+). It catalyses the reaction (S)-2,3,4,5-tetrahydrodipicolinate + NADP(+) + H2O = (2S,4S)-4-hydroxy-2,3,4,5-tetrahydrodipicolinate + NADPH + H(+). The protein operates within amino-acid biosynthesis; L-lysine biosynthesis via DAP pathway; (S)-tetrahydrodipicolinate from L-aspartate: step 4/4. Catalyzes the conversion of 4-hydroxy-tetrahydrodipicolinate (HTPA) to tetrahydrodipicolinate. In Rickettsia akari (strain Hartford), this protein is 4-hydroxy-tetrahydrodipicolinate reductase.